Here is a 70-residue protein sequence, read N- to C-terminus: Exodeoxyribonuclease 7 small subunit (70 aa).

The protein belongs to the XseB family. As to quaternary structure, heterooligomer composed of large and small subunits.

The protein resides in the cytoplasm. It carries out the reaction Exonucleolytic cleavage in either 5'- to 3'- or 3'- to 5'-direction to yield nucleoside 5'-phosphates.. Its function is as follows. Bidirectionally degrades single-stranded DNA into large acid-insoluble oligonucleotides, which are then degraded further into small acid-soluble oligonucleotides. The sequence is that of Exodeoxyribonuclease 7 small subunit from Streptococcus sanguinis (strain SK36).